The primary structure comprises 729 residues: Glycine--tRNA ligase, mitochondrial 1 (729 aa).

M1 is subject to N-acetylmethionine. The N-terminal 28 residues, 1-28 (MRIFSTFVFHRRQQIFNLRQFQTTTILR), are a transit peptide targeting the mitochondrion. Residues 50–106 (SLSEKSSSVEAQGNAVRALKASRAAKPEIDAAIEQLNKLKLEKSTVEKELQSIISSS) form the WHEP-TRS domain. E296 contacts glycine. ATP-binding positions include 328 to 330 (RNE) and 339 to 340 (RV). E347 is a glycine binding site. 454–455 (EC) is an ATP binding site. 575 to 577 (EPS) provides a ligand contact to glycine. R582 is a binding site for ATP.

The protein belongs to the class-II aminoacyl-tRNA synthetase family. As to quaternary structure, homodimer.

It localises to the mitochondrion. Its subcellular location is the cytoplasm. It is found in the cytosol. It catalyses the reaction tRNA(Gly) + glycine + ATP = glycyl-tRNA(Gly) + AMP + diphosphate. The catalysed reaction is 2 ATP + H(+) = P(1),P(4)-bis(5'-adenosyl) tetraphosphate + diphosphate. Functionally, catalyzes the ATP-dependent ligation of glycine to the 3'-end of its cognate tRNA, via the formation of an aminoacyl-adenylate intermediate (Gly-AMP). Also produces diadenosine tetraphosphate (Ap4A), a universal pleiotropic signaling molecule needed for cell regulation pathways, by direct condensation of 2 ATPs. Thereby, may play a special role in Ap4A homeostasis. The chain is Glycine--tRNA ligase, mitochondrial 1 from Arabidopsis thaliana (Mouse-ear cress).